Reading from the N-terminus, the 124-residue chain is Small ribosomal subunit protein uS13 (124 aa).

Residues Gly94–Lys124 are disordered. Basic residues predominate over residues Gln100–Lys124.

This sequence belongs to the universal ribosomal protein uS13 family. Part of the 30S ribosomal subunit. Forms a loose heterodimer with protein S19. Forms two bridges to the 50S subunit in the 70S ribosome.

In terms of biological role, located at the top of the head of the 30S subunit, it contacts several helices of the 16S rRNA. In the 70S ribosome it contacts the 23S rRNA (bridge B1a) and protein L5 of the 50S subunit (bridge B1b), connecting the 2 subunits; these bridges are implicated in subunit movement. Contacts the tRNAs in the A and P-sites. The polypeptide is Small ribosomal subunit protein uS13 (Flavobacterium johnsoniae (strain ATCC 17061 / DSM 2064 / JCM 8514 / BCRC 14874 / CCUG 350202 / NBRC 14942 / NCIMB 11054 / UW101) (Cytophaga johnsonae)).